The primary structure comprises 194 residues: Surfactant protein C (194 aa).

Residues Met-1 to Arg-21 form a disordered region. A propeptide spanning residues Met-1–Gln-23 is cleaved from the precursor. Residues Cys-28 and Cys-29 are each lipidated (S-palmitoyl cysteine). Residues His-59–Ile-194 constitute a propeptide that is removed on maturation. Positions Phe-95–Ile-194 constitute a BRICHOS domain. Cys-122 and Cys-186 are disulfide-bonded. The disordered stretch occupies residues Ser-149–Ser-170.

The protein resides in the secreted. It localises to the extracellular space. The protein localises to the surface film. Pulmonary surfactant associated proteins promote alveolar stability by lowering the surface tension at the air-liquid interface in the peripheral air spaces. In Rattus norvegicus (Rat), this protein is Surfactant protein C.